The sequence spans 146 residues: Large ribosomal subunit protein eL32 (146 aa).

It belongs to the eukaryotic ribosomal protein eL32 family.

The protein is Large ribosomal subunit protein eL32 (rpl32e) of Methanocaldococcus jannaschii (strain ATCC 43067 / DSM 2661 / JAL-1 / JCM 10045 / NBRC 100440) (Methanococcus jannaschii).